We begin with the raw amino-acid sequence, 346 residues long: Structure-specific endonuclease subunit SLX1 (346 aa).

In terms of domain architecture, GIY-YIG spans 22 to 105 (DFYGVYLLRS…QHPYQTRHIK (84 aa)). Residues 216–306 (CFICNETIDY…TPLQGKCLSC (91 aa)) form an SLX1-type zinc finger.

It belongs to the SLX1 family. As to quaternary structure, forms a heterodimer with SLX4. A divalent metal cation serves as cofactor.

The protein localises to the nucleus. Catalytic subunit of the SLX1-SLX4 structure-specific endonuclease that resolves DNA secondary structures generated during DNA repair and recombination. Has endonuclease activity towards branched DNA substrates, introducing single-strand cuts in duplex DNA close to junctions with ss-DNA. The chain is Structure-specific endonuclease subunit SLX1 from Debaryomyces hansenii (strain ATCC 36239 / CBS 767 / BCRC 21394 / JCM 1990 / NBRC 0083 / IGC 2968) (Yeast).